The primary structure comprises 637 residues: Chaperone protein HtpG (637 aa).

Residues M1–R335 are a; substrate-binding. A b region spans residues E336–R559. The segment at F560 to N637 is c.

It belongs to the heat shock protein 90 family. As to quaternary structure, homodimer.

It is found in the cytoplasm. Molecular chaperone. Has ATPase activity. The polypeptide is Chaperone protein HtpG (Ehrlichia ruminantium (strain Welgevonden)).